We begin with the raw amino-acid sequence, 351 residues long: 7,8-didemethyl-8-hydroxy-5-deazariboflavin synthase (351 aa).

Positions 35–275 (ITYSKNAFIP…EDISIQVPPN (241 aa)) constitute a Radical SAM core domain. 3 residues coordinate [4Fe-4S] cluster: Cys-49, Cys-53, and Cys-56.

The protein belongs to the radical SAM superfamily. CofG family. In terms of assembly, consists of two subunits, CofG and CofH. Requires [4Fe-4S] cluster as cofactor.

It carries out the reaction 5-amino-5-(4-hydroxybenzyl)-6-(D-ribitylimino)-5,6-dihydrouracil + S-adenosyl-L-methionine = 7,8-didemethyl-8-hydroxy-5-deazariboflavin + 5'-deoxyadenosine + L-methionine + NH4(+) + H(+). It participates in cofactor biosynthesis; coenzyme F0 biosynthesis. Catalyzes the radical-mediated synthesis of 7,8-didemethyl-8-hydroxy-5-deazariboflavin from 5-amino-5-(4-hydroxybenzyl)-6-(D-ribitylimino)-5,6-dihydrouracil. The sequence is that of 7,8-didemethyl-8-hydroxy-5-deazariboflavin synthase from Methanococcus vannielii (strain ATCC 35089 / DSM 1224 / JCM 13029 / OCM 148 / SB).